The following is a 181-amino-acid chain: Type II secretion system protein H (181 aa).

A propeptide spans Met-1–Gly-5 (leader sequence). N-methylphenylalanine is present on Phe-6. The chain crosses the membrane as a helical span at residues Phe-6–Ile-29.

This sequence belongs to the GSP H family. As to quaternary structure, type II secretion is composed of four main components: the outer membrane complex, the inner membrane complex, the cytoplasmic secretion ATPase and the periplasm-spanning pseudopilus. Interacts with core component OutG. Post-translationally, cleaved by prepilin peptidase. Methylated by prepilin peptidase at the amino group of the N-terminal phenylalanine once the leader sequence is cleaved by prepilin peptidase.

Its subcellular location is the cell inner membrane. In terms of biological role, component of the type II secretion system required for the energy-dependent secretion of extracellular factors such as proteases and toxins from the periplasm. Part of the pseudopilus tip complex that is critical for the recognition and binding of secretion substrates. This Dickeya chrysanthemi (Pectobacterium chrysanthemi) protein is Type II secretion system protein H (outH).